Consider the following 403-residue polypeptide: Peroxisomal membrane protein PEX13 (403 aa).

The span at 1–11 shows a compositional bias: pro residues; the sequence is MASQPPPPPKP. The disordered stretch occupies residues 1-68; the sequence is MASQPPPPPK…PSQQTGSSSV (68 aa). Over 1-134 the chain is Peroxisomal matrix; that stretch reads MASQPPPPPK…SSRGAFQSIE (134 aa). The span at 59–68 shows a compositional bias: polar residues; the sequence is PSQQTGSSSV. Residues 135–155 traverse the membrane as a helical segment; it reads SIVHAFASVSMMMDATFSAVY. The interval 145 to 233 is targeting to peroxisomes; sequence MMMDATFSAV…EDRAATSAKS (89 aa). At 156-174 the chain is on the cytoplasmic side; that stretch reads NSFRAVLDVANHFSRLKIH. A helical membrane pass occupies residues 175 to 192; that stretch reads FTKVFSAFALVRTIRYLY. An interaction with PEX19 region spans residues 175–196; sequence FTKVFSAFALVRTIRYLYRRLQ. Residues 193 to 233 are Peroxisomal matrix-facing; sequence RRLQRMLGLRRGSENEDLWAESEGTVACLGAEDRAATSAKS. Residues 234-254 form a helical membrane-spanning segment; that stretch reads WPIFLFFAVILGGPYLIWKLL. At 255 to 403 the chain is on the cytoplasmic side; sequence STHSDEVTDS…IGKDGEKQDL (149 aa). An SH3 domain is found at 272–336; the sequence is DDHVVARAEY…PANYVKILGK (65 aa). At S354 the chain carries Phosphoserine.

This sequence belongs to the peroxin-13 family. In terms of assembly, interacts (via SH3 domain) with PEX14 (via SH3-binding motif); forming the PEX13-PEX14 docking complex. Interacts with PEX19.

It is found in the peroxisome membrane. Functionally, component of the PEX13-PEX14 docking complex, a translocon channel that specifically mediates the import of peroxisomal cargo proteins bound to PEX5 receptor. The PEX13-PEX14 docking complex forms a large import pore which can be opened to a diameter of about 9 nm. Mechanistically, PEX5 receptor along with cargo proteins associates with the PEX14 subunit of the PEX13-PEX14 docking complex in the cytosol, leading to the insertion of the receptor into the organelle membrane with the concomitant translocation of the cargo into the peroxisome matrix. Involved in the import of PTS1- and PTS2-type containing proteins. This is Peroxisomal membrane protein PEX13 from Homo sapiens (Human).